The following is a 410-amino-acid chain: MGLLLPRGSYVFPVLASVSAATKRRAEWSYIKINITHSYSSNDKSSEFEEDNPTQKLSPEFQKAIAHGPSLSEFIKLSNNNQSTKEDFFSSPSSVNKSGKSLRLPEWLKTEIPCGGSVARLQKQLRSLNLHTVCEEARCPNISECWTAGKSTAATATIMIMGDTCTRGCRFCSVKTSPNPPPLDPDEPVNTAEAISKWDVDYIVITSVDRDDLGDGGARHIAKTIRQIKVRKPSIIVECLVPDFRGCTDSIHTVVRASPEVYAHNIETVESLQRVVRDHRAGYIQSLRSLETAKERSNRLVSSGDADFLVVTKSSIMLGLGEKEKEVMIALKDLRQAGVDCVTIGQYVQPTKRHLKVKEYIHPDKFDYWAKIGNDLGFLYTASGPLVRSSYRAGEYYIKHIIDQRKRKNI.

Residues cysteine 134, cysteine 139, cysteine 145, cysteine 165, cysteine 169, cysteine 172, and serine 390 each coordinate [4Fe-4S] cluster. A Radical SAM core domain is found at 148-379 (AGKSTAATAT…AKIGNDLGFL (232 aa)).

The protein belongs to the radical SAM superfamily. Lipoyl synthase family. The cofactor is [4Fe-4S] cluster.

The protein resides in the mitochondrion. It catalyses the reaction [[Fe-S] cluster scaffold protein carrying a second [4Fe-4S](2+) cluster] + N(6)-octanoyl-L-lysyl-[protein] + 2 oxidized [2Fe-2S]-[ferredoxin] + 2 S-adenosyl-L-methionine + 4 H(+) = [[Fe-S] cluster scaffold protein] + N(6)-[(R)-dihydrolipoyl]-L-lysyl-[protein] + 4 Fe(3+) + 2 hydrogen sulfide + 2 5'-deoxyadenosine + 2 L-methionine + 2 reduced [2Fe-2S]-[ferredoxin]. It functions in the pathway protein modification; protein lipoylation via endogenous pathway; protein N(6)-(lipoyl)lysine from octanoyl-[acyl-carrier-protein]: step 2/2. In terms of biological role, catalyzes the radical-mediated insertion of two sulfur atoms into the C-6 and C-8 positions of the octanoyl moiety bound to the lipoyl domains of lipoate-dependent enzymes, thereby converting the octanoylated domains into lipoylated derivatives. The polypeptide is Lipoyl synthase, mitochondrial (Schistosoma mansoni (Blood fluke)).